The following is a 1031-amino-acid chain: Pre-mRNA-splicing factor SYF1 (1031 aa).

4 HAT repeats span residues 28–60 (HLIPSADLPVEEDLLHNPENLRSWLSYIHNVKE), 90–122 (DGLQRLVSIYERAIAVFPTSYKLWKAYYLTRQS), 214–248 (KNGSYARRAFDRALRTLPPSLHGRVWGLYLRWAEI), and 250–269 (GGDAGERVWRRYLKVDPSLT). Residues 346 to 368 (VEEKVDGEQPQVEGQEQQPQEEP) are disordered. The segment covering 353 to 368 (EQPQVEGQEQQPQEEP) has biased composition (low complexity). HAT repeat units follow at residues 452 to 487 (GEFERATATFERGLAAVVTIRDFTQIFDAYAEFSET), 610 to 646 (PDLEQARKIFERATKVPFKAVDELAEVWCEWAEMELR), 664 to 698 (PKNTKINYYDDNIPPQSRLFKSLKLWSYYSDLEES), 700 to 732 (GTVESTKAVYDKIMELKIANAQVIVNYATFLEE), 734 to 768 (KYFEESFKVYERGIELFHFPIAFEIWNIYLSKFVK), 773 to 807 (KKLERARDLFEQALENCPEKFCKPLYLMYAKLEEE), 845 to 879 (FGLPATRPIYERALESLPDKQTAEMCRRFARMERK), and 881 to 915 (GEIDRARAIYAHASQFCDPRIEPEFWQEWNDFEIE). Disordered regions lie at residues 948–969 (AAASKGTEKPTDTSAQEAQDAA) and 1003–1031 (TNANGIDEGGEETGEMANPDAIVMDEDEF).

Belongs to the crooked-neck family. Associated with the spliceosome.

It localises to the nucleus. Involved in pre-mRNA splicing and cell cycle progression. The sequence is that of Pre-mRNA-splicing factor SYF1 (SYF1) from Cryptococcus neoformans var. neoformans serotype D (strain B-3501A) (Filobasidiella neoformans).